The primary structure comprises 228 residues: MNYEAIVLAAGRGKRMNAGMNKQFLELGGEPLIVRTLNVFERDERCTRIVLVVNPAERSRFEQLLARFRIQKVAALTDGGEERQHSVYNGLQALAGEEIVLIHDGARPFVRVHHLHELVNAAVQYGAAIPAVRVKDTIKKANGLFVEQTIDRSSLWAVQTPQAFRLSLIMEAHEAAKQAGYLGTDDASLVERIGKPVKIIEGDYRNIKLTTPEDLLFAEAILASRMAE.

Belongs to the IspD/TarI cytidylyltransferase family. IspD subfamily.

The catalysed reaction is 2-C-methyl-D-erythritol 4-phosphate + CTP + H(+) = 4-CDP-2-C-methyl-D-erythritol + diphosphate. The protein operates within isoprenoid biosynthesis; isopentenyl diphosphate biosynthesis via DXP pathway; isopentenyl diphosphate from 1-deoxy-D-xylulose 5-phosphate: step 2/6. In terms of biological role, catalyzes the formation of 4-diphosphocytidyl-2-C-methyl-D-erythritol from CTP and 2-C-methyl-D-erythritol 4-phosphate (MEP). The protein is 2-C-methyl-D-erythritol 4-phosphate cytidylyltransferase of Geobacillus kaustophilus (strain HTA426).